The primary structure comprises 494 residues: Poly(3-hydroxybutyrate) depolymerase (494 aa).

Residues 1-25 (MAFNFIRAAAAGAAMALCGVGSVHA) form the signal peptide. Residue Ser-45 is the Nucleophile of the active site. Active-site charge relay system residues include Asp-132 and His-166. In terms of domain architecture, Fibronectin type-III spans 347-431 (APTGVSTSGA…AAASGTTLAA (85 aa)).

The protein belongs to the AB hydrolase superfamily. Lipase family.

The protein resides in the secreted. It catalyses the reaction [(3R)-hydroxybutanoate](n) + H2O = [(3R)-hydroxybutanoate](n-2) + (3R)-hydroxybutanoate dimer + H(+). The enzyme catalyses [(3R)-hydroxybutanoate](n) + H2O = [(3R)-hydroxybutanoate](n-1) + (R)-3-hydroxybutanoate + H(+). It carries out the reaction (3R)-hydroxybutanoate dimer + H2O = 2 (R)-3-hydroxybutanoate + H(+). Functionally, catalyzes the hydrolysis of poly(3-hydroxybutyrate) (PHB) film, producing the monomer and dimer of 3-hydroxybutyrate (3HB), while the 3HB trimer and tetramer are not formed. This is Poly(3-hydroxybutyrate) depolymerase from Delftia acidovorans (Pseudomonas acidovorans).